The primary structure comprises 759 residues: uncharacterized protein (759 aa).

Disordered regions lie at residues 1–31 (MDGNRRVRFNTDRRPYLSPLQTSFPSSTSFQ) and 188–211 (NDEGEDVKDNEQDDNIDESDPFAN). Over residues 17–31 (LSPLQTSFPSSTSFQ) the composition is skewed to low complexity. A compositionally biased stretch (acidic residues) spans 189–207 (DEGEDVKDNEQDDNIDESD). Transmembrane regions (helical) follow at residues 434 to 454 (YFRTWILVVFYGFASATILPM), 456 to 476 (FQGGWIDLPIAFILGCLVGIL), 486 to 505 (MYNSLFEVTGSIITSFLSRA), 517 to 537 (FCFSALAEGAIVLILPGYIVL), 555 to 575 (MFYAIIYSLFLSFGISIGAAL), 597 to 617 (DKWKILFVPLFTLCLLIVNQA), 620 to 640 (SQWPVSIFISCAGYVVNYFTA), 643 to 663 (FGSNPIANAIGSFAIGCLGNI), 670 to 690 (GVAFAAVLPAIFVQVPSGLAA), and 726 to 746 (LVMVQIAIGISVGLFASALVV).

This sequence belongs to the ThrE exporter (TC 2.A.79) family.

The protein localises to the endoplasmic reticulum membrane. This is an uncharacterized protein from Schizosaccharomyces pombe (strain 972 / ATCC 24843) (Fission yeast).